Reading from the N-terminus, the 131-residue chain is Sperm microtubule inner protein 11 (131 aa).

The disordered stretch occupies residues 17–44 (SKKRDKTEETNQKDPVPTRLPPIFSEDG).

As to quaternary structure, microtubule inner protein component of sperm flagellar doublet microtubules. In terms of tissue distribution, expressed in sperm.

The protein localises to the cytoplasm. It is found in the cytoskeleton. Its subcellular location is the flagellum axoneme. Functionally, microtubule inner protein (MIP) part of the dynein-decorated doublet microtubules (DMTs) in flagellum axoneme. May serve to reinforce and thus stabilize the microtubule structure in the sperm flagella. This Bos taurus (Bovine) protein is Sperm microtubule inner protein 11 (SPMIP11).